The following is a 376-amino-acid chain: Sulfate/thiosulfate import ATP-binding protein CysA (376 aa).

Residues Ile-3–Phe-237 form the ABC transporter domain. Gly-35–Thr-42 is an ATP binding site.

The protein belongs to the ABC transporter superfamily. Sulfate/tungstate importer (TC 3.A.1.6) family. The complex is composed of two ATP-binding proteins (CysA), two transmembrane proteins (CysT and CysW) and a solute-binding protein (CysP).

It localises to the cell inner membrane. It carries out the reaction sulfate(out) + ATP + H2O = sulfate(in) + ADP + phosphate + H(+). It catalyses the reaction thiosulfate(out) + ATP + H2O = thiosulfate(in) + ADP + phosphate + H(+). Its function is as follows. Part of the ABC transporter complex CysAWTP involved in sulfate/thiosulfate import. Responsible for energy coupling to the transport system. The protein is Sulfate/thiosulfate import ATP-binding protein CysA of Vibrio cholerae serotype O1 (strain ATCC 39315 / El Tor Inaba N16961).